The chain runs to 173 residues: Co-chaperone protein HscB homolog (173 aa).

Residues 5–77 (SHFALFDLEP…SQRARYLLSL (73 aa)) enclose the J domain.

Belongs to the HscB family. Interacts with HscA and stimulates its ATPase activity.

Co-chaperone involved in the maturation of iron-sulfur cluster-containing proteins. Seems to help targeting proteins to be folded toward HscA. The protein is Co-chaperone protein HscB homolog of Azotobacter vinelandii (strain DJ / ATCC BAA-1303).